Consider the following 514-residue polypeptide: MDVIKKKHWWQSDALKWSVLGLLGLLVGYLVVLMYAQGEYLFAITTLILSSAGLYIFANRKAYAWRYVYPGMAGMGLFVLFPLVCTIAIAFTNYSSTNQLTFERAQEVLLDRSWQAGKTYNFGLYPAGDEWQLALSDGETGKNYLSDAFKFGGEQKLQLKETTAQPEGERANLRVITQNRQALSDITAILPDGNKVMMSSLRQFSGTQPLYTLDGDGTLTNNQSGVKYRPNNQIGFYQSITADGNWGDEKLSPGYTVTTGWKNFTRVFTDEGIQKPFLAIFVWTVVFSLITVFLTVAVGMVLACLVQWEALRGKAVYRVLLILPYAVPSFISILIFKGLFNQSFGEINMMLSALFGVKPAWFSDPTTARTMLIIVNTWLGYPYMMILCMGLLKAIPDDLYEASAMDGAGLFQNFFKITLPLLIKPLTPLMIASFAFNFNNFVLIQLLTNGGPDRLGTTTPAGYTDLLVNYTYRIAFEGGGGQDFGLAAAIATLIFLLVGALAIVNLKATRMKFD.

Residues 1–13 are Cytoplasmic-facing; it reads MDVIKKKHWWQSD. A helical transmembrane segment spans residues 14 to 34; it reads ALKWSVLGLLGLLVGYLVVLM. Topologically, residues 35–37 are periplasmic; that stretch reads YAQ. Residues 38–58 traverse the membrane as a helical segment; it reads GEYLFAITTLILSSAGLYIFA. The Cytoplasmic portion of the chain corresponds to 59 to 70; sequence NRKAYAWRYVYP. The helical transmembrane segment at 71 to 91 threads the bilayer; sequence GMAGMGLFVLFPLVCTIAIAF. Residues 92-276 lie on the Periplasmic side of the membrane; that stretch reads TNYSSTNQLT…VFTDEGIQKP (185 aa). Residues 277–297 traverse the membrane as a helical segment; it reads FLAIFVWTVVFSLITVFLTVA. Positions 281 to 505 constitute an ABC transmembrane type-1 domain; it reads FVWTVVFSLI…LLVGALAIVN (225 aa). The Cytoplasmic segment spans residues 298–319; that stretch reads VGMVLACLVQWEALRGKAVYRV. A helical transmembrane segment spans residues 320–340; the sequence is LLILPYAVPSFISILIFKGLF. Residues 341–371 are Periplasmic-facing; sequence NQSFGEINMMLSALFGVKPAWFSDPTTARTM. A helical transmembrane segment spans residues 372-392; sequence LIIVNTWLGYPYMMILCMGLL. The Cytoplasmic segment spans residues 393–416; it reads KAIPDDLYEASAMDGAGLFQNFFK. Residues 417–437 traverse the membrane as a helical segment; sequence ITLPLLIKPLTPLMIASFAFN. The Periplasmic segment spans residues 438 to 483; the sequence is FNNFVLIQLLTNGGPDRLGTTTPAGYTDLLVNYTYRIAFEGGGGQD. Residues 484–504 traverse the membrane as a helical segment; it reads FGLAAAIATLIFLLVGALAIV. Over 505–514 the chain is Cytoplasmic; sequence NLKATRMKFD.

This sequence belongs to the binding-protein-dependent transport system permease family. MalFG subfamily. As to quaternary structure, the complex is composed of two ATP-binding proteins (MalK), two transmembrane proteins (MalG and MalF) and a solute-binding protein (MalE).

It localises to the cell inner membrane. Its function is as follows. Part of the ABC transporter complex MalEFGK involved in maltose/maltodextrin import. Probably responsible for the translocation of the substrate across the membrane. The polypeptide is Maltose/maltodextrin transport system permease protein MalF (malF) (Shigella flexneri).